A 241-amino-acid polypeptide reads, in one-letter code: Transcriptional regulatory protein SrrA (241 aa).

The 114-residue stretch at 4–117 (EILIVDDEDR…EVVLRVKALL (114 aa)) folds into the Response regulatory domain. Asp-53 carries the post-translational modification 4-aspartylphosphate. A DNA-binding region (ompR/PhoB-type) is located at residues 133–233 (RDVIEFKHLE…VWGVGYKFEV (101 aa)).

Phosphorylated by SrrB.

It localises to the cytoplasm. Its function is as follows. Member of the two-component regulatory system SrrA/SrrB, which is involved in the global regulation of staphylococcal virulence factors in response to environmental oxygen levels as well as biofilm formation. Also plays an essential role in host-derived nitric oxide resistance by regulating hmp/flavohemoglobin, an enzyme that detoxifies nitric oxide by converting it to nitrate. Functions as a transcription regulator by direct binding to promoter regions of target genes. This Staphylococcus aureus (strain NCTC 8325 / PS 47) protein is Transcriptional regulatory protein SrrA (srrA).